Here is a 1141-residue protein sequence, read N- to C-terminus: MAVPGDAARVRDKPVHSGVSQAPTAGRDCHHRADPASPRDSGCRGCWGDLVLQPLRSSRKLSSALCAGSLSFLLALLVRLVRGEVGCDLEQCKEAAAAEEEEAAPGAEGGVFPGPRGGAPGGGARLSPWLQPSALLFSLLCAFFWMGLYLLRAGVRLPLAVALLAACCGGEALVQIGLGVGEDHLLSLPAAGVVLSCLAAATWLVLRLRLGVLMIALTSAVRTVSLISLERFKVAWRPYLAYLAGVLGILLARYVEQILPQSAEAAPREHLGSQLIAGTKEDIPVFKRRRRSSSVVSAEMSGCSSKSHRRTSLPCIPREQLMGHSEWDHKRGPRGSQSSGTSITVDIAVMGEAHGLITDLLADPSLPPNVCTSLRAVSNLLSTQLTFQAIHKPRVNPVTSLSENYTCSDSEESSEKDKLAIPKRLRRSLPPGLLRRVSSTWTTTTSATGLPTLEPAPVRRDRSTSIKLQEAPSSSPDSWNNPVMMTLTKSRSFTSSYAISAANHVKAKKQSRPGALAKISPLSSPCSSPLQGTPASSLVSKISAVQFPESADTTAKQSLGSHRALTYTQSAPDLSPQILTPPVICSSCGRPYSQGNPADEPLERSGVATRTPSRTDDTAQVTSDYETNNNSDSSDIVQNEDETECLREPLRKASACSTYAPETMMFLDKPILAPEPLVMDNLDSIMEQLNTWNFPIFDLVENIGRKCGRILSQVSYRLFEDMGLFEAFKIPIREFMNYFHALEIGYRDIPYHNRIHATDVLHAVWYLTTQPIPGLSTVINDHGSTSDSDSDSGFTHGHMGYVFSKTYNVTDDKYGCLSGNIPALELMALYVAAAMHDYDHPGRTNAFLVATSAPQAVLYNDRSVLENHHAAAAWNLFMSRPEYNFLINLDHVEFKHFRFLVIEAILATDLKKHFDFVAKFNGKVNDDVGIDWTNENDRLLVCQMCIKLADINGPAKCKELHLQWTDGIVNEFYEQGDEEASLGLPISPFMDRSAPQLANLQESFISHIVGPLCNSYDSAGLMPGKWVEDSDESGDTDDPEEEEEEAPAPNEEETCENNESPKKKTFKRRKIYCQITQHLLQNHKMWKKVIEEEQRLAGIENQSLDQTPQSHSSEQIQAIKEEEEEKGKPRGEEIPTQKPDQ.

Residues 1-42 (MAVPGDAARVRDKPVHSGVSQAPTAGRDCHHRADPASPRDSG) form a disordered region. The next 6 helical transmembrane spans lie at 61 to 81 (LSSALCAGSLSFLLALLVRLV), 130 to 150 (LQPSALLFSLLCAFFWMGLYL), 160 to 180 (AVALLAACCGGEALVQIGLGV), 185 to 205 (LLSLPAAGVVLSCLAAATWLV), 210 to 230 (LGVLMIALTSAVRTVSLISLE), and 232 to 252 (FKVAWRPYLAYLAGVLGILLA). A Phosphoserine modification is found at Ser312. Residues Ser428 and Ser438 each carry the phosphoserine; by PKA and PKC modification. Low complexity predominate over residues 436 to 448 (RVSSTWTTTTSAT). A disordered region spans residues 436-482 (RVSSTWTTTTSATGLPTLEPAPVRRDRSTSIKLQEAPSSSPDSWNNP). A compositionally biased stretch (polar residues) spans 465–482 (SIKLQEAPSSSPDSWNNP). Residues Ser492, Ser520, and Ser524 each carry the phosphoserine modification. Residues 590–640 (RPYSQGNPADEPLERSGVATRTPSRTDDTAQVTSDYETNNNSDSSDIVQNE) are disordered. The span at 608-637 (ATRTPSRTDDTAQVTSDYETNNNSDSSDIV) shows a compositional bias: polar residues. An interaction with SLFN12 region spans residues 669–1141 (KPILAPEPLV…EEIPTQKPDQ (473 aa)). The 420-residue stretch at 674–1093 (PEPLVMDNLD…KMWKKVIEEE (420 aa)) folds into the PDEase domain. Residue His752 is the Proton donor of the active site. His752 contacts AMP. Positions 756, 836, 837, and 950 each coordinate Mn(2+). The AMP site is built by Asp837, Asp950, and Gln1001. Asp837 lines the Mg(2+) pocket. 2 disordered regions span residues 1023–1062 (PGKWVEDSDESGDTDDPEEEEEEAPAPNEEETCENNESPK) and 1100–1141 (ENQS…KPDQ). The span at 1029 to 1056 (DSDESGDTDDPEEEEEEAPAPNEEETCE) shows a compositional bias: acidic residues. Ser1033 is subject to Phosphoserine. Thr1036 bears the Phosphothreonine mark. The segment covering 1100-1113 (ENQSLDQTPQSHSS) has biased composition (polar residues). Residue Lys1120 forms a Glycyl lysine isopeptide (Lys-Gly) (interchain with G-Cter in SUMO2) linkage. A compositionally biased stretch (basic and acidic residues) spans 1125 to 1141 (EKGKPRGEEIPTQKPDQ).

The protein belongs to the cyclic nucleotide phosphodiesterase family. PDE3 subfamily. Homodimer. Interacts with SLFN12; direct low affinity interaction which is stimulated by binding of 17beta-estradiol/E2 to PDE3A and that positively regulates the ribonuclease activity of SLFN12. Mn(2+) serves as cofactor. It depends on Mg(2+) as a cofactor.

The protein resides in the membrane. It is found in the cytoplasm. It localises to the cytosol. It carries out the reaction a nucleoside 3',5'-cyclic phosphate + H2O = a nucleoside 5'-phosphate + H(+). It catalyses the reaction 3',5'-cyclic AMP + H2O = AMP + H(+). The catalysed reaction is 3',5'-cyclic GMP + H2O = GMP + H(+). The enzyme catalyses 3',5'-cyclic UMP + H2O = UMP + H(+). Inhibited by cGMP. Inhibited by 17beta-estradiol. Inhibited by milrinone. Functionally, cyclic nucleotide phosphodiesterase with specificity for the second messengers cAMP and cGMP, which are key regulators of many important physiological processes. Also has activity toward cUMP. Independently of its catalytic activity it is part of an E2/17beta-estradiol-induced pro-apoptotic signaling pathway. E2 stabilizes the PDE3A/SLFN12 complex in the cytosol, promoting the dephosphorylation of SLFN12 and activating its pro-apoptotic ribosomal RNA/rRNA ribonuclease activity. This apoptotic pathway might be relevant in tissues with high concentration of E2 and be for instance involved in placenta remodeling. The sequence is that of cGMP-inhibited 3',5'-cyclic phosphodiesterase 3A from Homo sapiens (Human).